The primary structure comprises 220 residues: 7-cyano-7-deazaguanine synthase (220 aa).

ATP is bound at residue 10–20 (FSGGQDSTTCL). Zn(2+) contacts are provided by cysteine 186, cysteine 195, cysteine 198, and cysteine 201.

The protein belongs to the QueC family. In terms of assembly, homodimer. Requires Zn(2+) as cofactor.

The catalysed reaction is 7-carboxy-7-deazaguanine + NH4(+) + ATP = 7-cyano-7-deazaguanine + ADP + phosphate + H2O + H(+). It participates in purine metabolism; 7-cyano-7-deazaguanine biosynthesis. In terms of biological role, catalyzes the ATP-dependent conversion of 7-carboxy-7-deazaguanine (CDG) to 7-cyano-7-deazaguanine (preQ(0)). The sequence is that of 7-cyano-7-deazaguanine synthase from Bacillus cereus (strain AH187).